We begin with the raw amino-acid sequence, 336 residues long: GTPase Obg (336 aa).

Residues 1-159 (MKFLDETKVY…KTIWLRLKLI (159 aa)) enclose the Obg domain. The region spanning 160–327 (ADAGLVGLPN…ALRALRSVIA (168 aa)) is the OBG-type G domain. GTP is bound by residues 166 to 173 (GLPNAGKS), 191 to 195 (FTTLH), 212 to 215 (DIPG), 279 to 282 (SQID), and 308 to 310 (SAV). Mg(2+) contacts are provided by S173 and T193.

It belongs to the TRAFAC class OBG-HflX-like GTPase superfamily. OBG GTPase family. Monomer. The cofactor is Mg(2+).

The protein localises to the cytoplasm. An essential GTPase which binds GTP, GDP and possibly (p)ppGpp with moderate affinity, with high nucleotide exchange rates and a fairly low GTP hydrolysis rate. Plays a role in control of the cell cycle, stress response, ribosome biogenesis and in those bacteria that undergo differentiation, in morphogenesis control. This is GTPase Obg from Rhizobium meliloti (strain 1021) (Ensifer meliloti).